We begin with the raw amino-acid sequence, 236 residues long: Protein-L-isoaspartate O-methyltransferase 1 (236 aa).

S86 is an active-site residue.

The protein belongs to the methyltransferase superfamily. L-isoaspartyl/D-aspartyl protein methyltransferase family.

The protein resides in the cytoplasm. It carries out the reaction [protein]-L-isoaspartate + S-adenosyl-L-methionine = [protein]-L-isoaspartate alpha-methyl ester + S-adenosyl-L-homocysteine. Functionally, catalyzes the methyl esterification of L-isoaspartyl residues in peptides and proteins that result from spontaneous decomposition of normal L-aspartyl and L-asparaginyl residues. It plays a role in the repair and/or degradation of damaged proteins. The sequence is that of Protein-L-isoaspartate O-methyltransferase 1 from Nitrosospira multiformis (strain ATCC 25196 / NCIMB 11849 / C 71).